The sequence spans 511 residues: Cytochrome P450 26B1 (511 aa).

Cys-440 provides a ligand contact to heme.

The protein belongs to the cytochrome P450 family. Heme is required as a cofactor.

It is found in the endoplasmic reticulum membrane. The protein localises to the microsome membrane. It catalyses the reaction all-trans-retinoate + reduced [NADPH--hemoprotein reductase] + O2 = all-trans-4-hydroxyretinoate + oxidized [NADPH--hemoprotein reductase] + H2O + H(+). The enzyme catalyses all-trans-retinoate + reduced [NADPH--hemoprotein reductase] + O2 = all-trans-18-hydroxyretinoate + oxidized [NADPH--hemoprotein reductase] + H2O + H(+). Functionally, a cytochrome P450 monooxygenase involved in the metabolism of retinoates (RAs), the active metabolites of vitamin A, and critical signaling molecules in animals. RAs exist as at least four different isomers: all-trans-RA (atRA), 9-cis-RA, 13-cis-RA, and 9,13-dicis-RA, where atRA is considered to be the biologically active isomer, although 9-cis-RA and 13-cis-RA also have activity. Catalyzes the hydroxylation of atRA primarily at C-4 and C-18, thereby contributing to the regulation of atRA homeostasis and signaling. Hydroxylation of atRA limits its biological activity and initiates a degradative process leading to its eventual elimination. Involved in the convertion of atRA to all-trans-4-oxo-RA. Can oxidize all-trans-13,14-dihydroretinoate (DRA) to metabolites which could include all-trans-4-oxo-DRA, all-trans-4-hydroxy-DRA, all-trans-5,8-epoxy-DRA, and all-trans-18-hydroxy-DRA. Plays a role in skeletal development, both at the level of patterning and in the ossification of bone and the establishment of some synovial joints. This is Cytochrome P450 26B1 from Danio rerio (Zebrafish).